The primary structure comprises 206 residues: Cytochrome c biogenesis ATP-binding export protein CcmA (206 aa).

The region spanning 2 to 206 (LEARDVVCIR…IQLTPSEGTP (205 aa)) is the ABC transporter domain. Residue 34–41 (GANGVGKT) coordinates ATP.

It belongs to the ABC transporter superfamily. CcmA exporter (TC 3.A.1.107) family. The complex is composed of two ATP-binding proteins (CcmA) and two transmembrane proteins (CcmB).

It is found in the cell inner membrane. It catalyses the reaction heme b(in) + ATP + H2O = heme b(out) + ADP + phosphate + H(+). In terms of biological role, part of the ABC transporter complex CcmAB involved in the biogenesis of c-type cytochromes; once thought to export heme, this seems not to be the case, but its exact role is uncertain. Responsible for energy coupling to the transport system. The polypeptide is Cytochrome c biogenesis ATP-binding export protein CcmA (Pectobacterium atrosepticum (strain SCRI 1043 / ATCC BAA-672) (Erwinia carotovora subsp. atroseptica)).